The sequence spans 190 residues: Segregation and condensation protein B (190 aa).

Belongs to the ScpB family. Homodimer. Homodimerization may be required to stabilize the binding of ScpA to the Smc head domains. Component of a cohesin-like complex composed of ScpA, ScpB and the Smc homodimer, in which ScpA and ScpB bind to the head domain of Smc. The presence of the three proteins is required for the association of the complex with DNA.

It is found in the cytoplasm. Functionally, participates in chromosomal partition during cell division. May act via the formation of a condensin-like complex containing Smc and ScpA that pull DNA away from mid-cell into both cell halves. The chain is Segregation and condensation protein B from Bacillus cereus (strain ZK / E33L).